A 252-amino-acid polypeptide reads, in one-letter code: 14-3-3-like protein GF14 omicron (252 aa).

A phosphoserine mark is found at serine 65 and serine 188.

Belongs to the 14-3-3 family.

Its subcellular location is the nucleus. The protein resides in the cytoplasm. Is associated with a DNA binding complex that binds to the G box, a well-characterized cis-acting DNA regulatory element found in plant genes. This Arabidopsis thaliana (Mouse-ear cress) protein is 14-3-3-like protein GF14 omicron (GRF11).